Reading from the N-terminus, the 684-residue chain is Rabphilin-3A (684 aa).

The segment at 1-21 (MTDTVVNRWMYPGDGPLQSND) is disordered. Positions 40–157 (QRKQEELTDE…KRSGAWFFKG (118 aa)) constitute a RabBD domain. The FYVE-type zinc-finger motif lies at 88 to 145 (GDGVNRCILCGEQLGMLGSACVVCEDCKKNVCTKCGVETSNNRPHPVWLCKICLEQRE). Zn(2+)-binding residues include Cys94, Cys97, Cys111, Cys114, Cys119, Cys122, Cys137, and Cys140. The segment at 162-377 (VLPQPMPIKK…EEEEANSYDS (216 aa)) is disordered. Residues 199–208 (ARGDMEDRRA) are compositionally biased toward basic and acidic residues. At Arg223 the chain carries Omega-N-methylarginine. The segment covering 243–252 (RDSEGWDHGH) has biased composition (basic and acidic residues). Residue Ser274 is modified to Phosphoserine. A compositionally biased stretch (pro residues) spans 283-299 (ASMPSPAPPQPVQPGPP). Positions 301-310 (GSRAAPGPGR) are enriched in low complexity. The C2 1 domain maps to 382–504 (TLGALEFSLL…KANQRKNFNI (123 aa)). 14 residues coordinate Ca(2+): Met412, Asp413, Asp419, Asp474, Glu475, Asp476, Glu482, Glu529, Asp571, Asp577, Asp631, Tyr632, Asp633, and Asp639. The C2 2 domain maps to 540–673 (ERGKILVSLM…NKDKKIERWH (134 aa)). A phosphoserine mark is found at Ser682 and Ser683.

In terms of assembly, interacts with RAB3B, RAB3C, RAB3D, RAB8A, RAB27A and RAB27B. Interacts with RAB3A; this interaction recruits RPH3A to synaptic vesicules. Interacts (via C2B domain) with SNAP25. Interacts with deubiquitinating enzyme CAND1; this interaction results in the deubiquitination of RPH3A. Interacts with GRIN2A and DLG4; this ternary complex regulates NMDA receptor composition at postsynaptic membranes. Interacts with SNCA. It depends on Ca(2+) as a cofactor. Post-translationally, ubiquitinated. Deubiquitinated by CAND1 to prevent its degradation. In terms of tissue distribution, specifically expressed in brain.

Its subcellular location is the cytoplasmic vesicle. The protein localises to the secretory vesicle. The protein resides in the synaptic vesicle membrane. It localises to the cell projection. It is found in the dendritic spine. Its subcellular location is the postsynaptic cell membrane. The protein localises to the membrane. Plays an essential role in docking and fusion steps of regulated exocytosis. At the presynaptic level, RPH3A is recruited by RAB3A to the synaptic vesicle membrane in a GTP-dependent manner where it modulates synaptic vesicle trafficking and calcium-triggered neurotransmitter release. In the post-synaptic compartment, forms a ternary complex with GRIN2A and DLG4 and regulates NMDA receptor stability. Also plays a role in the exocytosis of arginine vasopressin hormone. This is Rabphilin-3A (Rph3a) from Rattus norvegicus (Rat).